Reading from the N-terminus, the 574-residue chain is MEMLSGSEMIIQSLIDQGIKYIFGYPGGAVLDIYDSLKSTKKIKHILVRHEQGATHMADGYARATGKIGVVLVTSGPGATNSITGIATAYMDSIPIVVISGQVSSSLIGYDAFQECDMIGISRPIVKHSFLVKKTEDIPITFKKAFWLASSGRPGPIVIDLPKDILNSYNKKPYIWPIEVNIRSYNPITKGHSRQIKKAIDILKLSKQPVIYAGGGVISANCHNELKELAEKLNIPVTTSLMALGAFPGNHPQNLQMLGMHGTYEANMAMHYADVILAIGVRFDDRTTNNVKKYCPNATIIHIDIDPTSISKTITAHIPIVGNAKNVLQQILVFINSNMFVKEFYCLKKWWIKIQSWKNKNSLNFDTNSDNIKPQSVIKTIWKLTKGKAFITSDVGQHQMFAALYYSFQKPRRWINSGGLGTMGFGLPAALGVKLAFPNETVICVTGDGSIQMNIQELSTAMQYELPILILNLNNKSLGMVKQWQDIIYSGRHSHSYMKSLPNFIKLAESYGHSGISINTPKELEKKLQLALEKLQNGHLVFVDIKIDASEHVYPMQIRDGGMNNMLLRKNGQK.

Thiamine diphosphate is bound at residue Glu-51. Residues Arg-153, 261-282 (HGTY…IGVR), and 304-323 (DIDP…IVGN) each bind FAD. Positions 397–477 (QHQMFAALYY…ILILNLNNKS (81 aa)) are thiamine pyrophosphate binding. Mg(2+) is bound by residues Asp-448 and Asn-475.

Belongs to the TPP enzyme family. As to quaternary structure, dimer of large and small chains. The cofactor is Mg(2+). Thiamine diphosphate is required as a cofactor.

It catalyses the reaction 2 pyruvate + H(+) = (2S)-2-acetolactate + CO2. Its pathway is amino-acid biosynthesis; L-isoleucine biosynthesis; L-isoleucine from 2-oxobutanoate: step 1/4. The protein operates within amino-acid biosynthesis; L-valine biosynthesis; L-valine from pyruvate: step 1/4. This chain is Acetolactate synthase large subunit (ilvI), found in Buchnera aphidicola subsp. Schlechtendalia chinensis.